The chain runs to 182 residues: Hypoxanthine/guanine phosphoribosyltransferase (182 aa).

This sequence belongs to the purine/pyrimidine phosphoribosyltransferase family. Archaeal HPRT subfamily. As to quaternary structure, homodimer.

The protein localises to the cytoplasm. The enzyme catalyses IMP + diphosphate = hypoxanthine + 5-phospho-alpha-D-ribose 1-diphosphate. It catalyses the reaction GMP + diphosphate = guanine + 5-phospho-alpha-D-ribose 1-diphosphate. It functions in the pathway purine metabolism; IMP biosynthesis via salvage pathway; IMP from hypoxanthine: step 1/1. In terms of biological role, catalyzes a salvage reaction resulting in the formation of IMP that is energically less costly than de novo synthesis. The polypeptide is Hypoxanthine/guanine phosphoribosyltransferase (Methanospirillum hungatei JF-1 (strain ATCC 27890 / DSM 864 / NBRC 100397 / JF-1)).